The chain runs to 878 residues: Probable di- and tripeptidase DUG2 (878 aa).

5 WD repeats span residues 18–57, 68–107, 235–274, 282–322, and 362–405; these read NHAFSILSIVAFPKKRLLFAGSQDSKILVFDLPTYNLIHT, HTRSSVLCLTGSEDENFLFSGGADSLVRIWSIGEKTIRDD, RFNQLLEKSSRTSGAEHIISSAGDGISKLWEFSKDKGQNT, DKID…IIST, and PQQG…SAVP. Zn(2+) is bound at residue histidine 520. The active site involves aspartate 522. Residue aspartate 553 coordinates Zn(2+). The active-site Proton acceptor is glutamate 586. Glutamate 587 lines the Zn(2+) pocket. The stretch at 608–651 is one WD 6 repeat; it reads IDWILLSNSTWVDQEHPCLNYGLRGVINAQIKVWSDKPDGHSGL. Residue histidine 853 participates in Zn(2+) binding.

Belongs to the peptidase M20A family. In terms of assembly, component of the GSH degradosomal complex composed of at least DUG1, DUG2 and DUG3. Zn(2+) is required as a cofactor.

The protein localises to the cytoplasm. The protein resides in the nucleus. Functionally, component of the GSH degradosomal complex involved in the degradation of glutathione (GSH) and other peptides containing a gamma-glu-X bond. This is Probable di- and tripeptidase DUG2 (DUG2) from Saccharomyces cerevisiae (strain ATCC 204508 / S288c) (Baker's yeast).